Consider the following 79-residue polypeptide: CDC42 small effector protein 1 (79 aa).

2 S-palmitoyl cysteine lipidation sites follow: cysteine 10 and cysteine 11. The 14-residue stretch at 30 to 43 (IGEPMNFVHLTHIG) folds into the CRIB domain. The interval 48 to 79 (GAGDGLAMTGAVQEQMRSKGNRDRPWSNSRGL) is disordered. Residues 63 to 72 (MRSKGNRDRP) are compositionally biased toward basic and acidic residues.

It belongs to the CDC42SE/SPEC family. In terms of assembly, interacts with CDC42 (in GTP-bound form). Interacts weakly with RAC1 and not at all with RHOA.

It localises to the cytoplasm. The protein localises to the cytoskeleton. It is found in the cell membrane. In terms of biological role, probably involved in the organization of the actin cytoskeleton by acting downstream of CDC42, inducing actin filament assembly. Alters CDC42-induced cell shape changes. In activated T-cells, may play a role in CDC42-mediated F-actin accumulation at the immunological synapse. May play a role in early contractile events in phagocytosis in macrophages. This Pongo abelii (Sumatran orangutan) protein is CDC42 small effector protein 1 (CDC42SE1).